The chain runs to 2446 residues: Transcription factor HIVEP2 (2446 aa).

Residues 1–93 are disordered; that stretch reads MDTGDTALGQ…YPPHRPSPYS (93 aa). Residues 17–28 show a composition bias toward basic and acidic residues; sequence GETDKASGRWRQ. C2H2-type zinc fingers lie at residues 189–211 and 217–239; these read YICP…IRSH and YPCI…RKSH. Disordered regions lie at residues 272-303, 340-416, 543-563, and 751-985; these read HSDG…PIPL, ESSQ…PPNT, SNSV…LRGS, and SHGH…SFER. 2 stretches are compositionally biased toward polar residues: residues 381–416 and 543–556; these read SEPS…PPNT and SNSV…NLTI. Positions 751–760 are enriched in basic and acidic residues; the sequence is SHGHTERFDP. Polar residues predominate over residues 766–777; it reads QPGSPSLVSEES. Basic and acidic residues predominate over residues 782–791; the sequence is DSDKMSDLGG. Residues 800 to 812 show a composition bias toward polar residues; the sequence is SVIQHTNSLSRPN. The residue at position 819 (serine 819) is a Phosphoserine. The segment covering 863–878 has biased composition (low complexity); it reads PSPSQQVQQQSYHTQP. Residues 892-916 are compositionally biased toward basic and acidic residues; sequence RVTEEPDKPEKEKEAQSKEPEKPVE. Positions 937 to 943 match the Nuclear localization signal motif; it reads PKKKRLR. Phosphoserine occurs at positions 950, 955, 1048, 1443, and 1447. Low complexity predominate over residues 952 to 982; the sequence is GESSFESTGTGLSRSPSQESNLSHSSSFSMS. The interval 1485 to 1603 is disordered; the sequence is KDLSRPQKPQ…LEEEGKGHKR (119 aa). Composition is skewed to low complexity over residues 1510-1533 and 1576-1586; these read SGSS…SPSS and SDMSMSPQSSS. 2 C2H2-type zinc fingers span residues 1799-1821 and 1827-1851; these read YICE…IRTH and YVCK…SKAH. 2 disordered regions span residues 1882–1951 and 2024–2129; these read AAEK…VNVG and EECM…RRDL. The segment covering 1899–1925 has biased composition (acidic residues); the sequence is DAEESDGEDGDDNDDDDEDEDDFDDQG. Positions 2029–2053 are enriched in low complexity; the sequence is PSEPSSSPRDFSPSSHHSSPGYDSS. A run of 10 repeats spans residues 2053 to 2056, 2059 to 2062, 2071 to 2074, 2083 to 2086, 2089 to 2092, 2106 to 2109, 2112 to 2115, 2118 to 2121, 2130 to 2133, and 2145 to 2148. The interval 2053-2148 is 10 X 4 AA tandem repeats of S-P-[RGMKC]-[RK]; sequence SPCRDNSPKR…TTIRAPSPRR (96 aa). The segment covering 2078–2107 has biased composition (basic and acidic residues); sequence PRRDLSPMRHLSPRKEAALRREMSQRDVSP. At serine 2118 the chain carries Phosphoserine. 3 disordered regions span residues 2242–2325, 2371–2403, and 2423–2446; these read PALS…QEEN, HFSR…SQTP, and HSSK…SQLH. Phosphoserine is present on residues serine 2297 and serine 2301. Positions 2307–2317 are enriched in polar residues; it reads KQSTSEDSLNA. A compositionally biased stretch (basic and acidic residues) spans 2387 to 2396; it reads PDLHDGEKDN. 2 positions are modified to phosphoserine: serine 2429 and serine 2431. Over residues 2433–2446 the composition is skewed to basic and acidic residues; sequence EESKDPSSEKSQLH.

Interacts with TCF4. As to expression, expressed in brain and skeletal muscle.

Its subcellular location is the nucleus. Its function is as follows. This protein specifically binds to the DNA sequence 5'-GGGACTTTCC-3' which is found in the enhancer elements of numerous viral promoters such as those of SV40, CMV, or HIV1. In addition, related sequences are found in the enhancer elements of a number of cellular promoters, including those of the class I MHC, interleukin-2 receptor, somatostatin receptor II, and interferon-beta genes. It may act in T-cell activation. This chain is Transcription factor HIVEP2 (HIVEP2), found in Homo sapiens (Human).